We begin with the raw amino-acid sequence, 360 residues long: Phosphoserine aminotransferase (360 aa).

Arginine 41 lines the L-glutamate pocket. 4 residues coordinate pyridoxal 5'-phosphate: tryptophan 101, threonine 152, aspartate 172, and glutamine 195. At lysine 196 the chain carries N6-(pyridoxal phosphate)lysine. Pyridoxal 5'-phosphate is bound at residue 237–238 (NT).

This sequence belongs to the class-V pyridoxal-phosphate-dependent aminotransferase family. SerC subfamily. As to quaternary structure, homodimer. Requires pyridoxal 5'-phosphate as cofactor.

The protein localises to the cytoplasm. It carries out the reaction O-phospho-L-serine + 2-oxoglutarate = 3-phosphooxypyruvate + L-glutamate. It catalyses the reaction 4-(phosphooxy)-L-threonine + 2-oxoglutarate = (R)-3-hydroxy-2-oxo-4-phosphooxybutanoate + L-glutamate. The protein operates within amino-acid biosynthesis; L-serine biosynthesis; L-serine from 3-phospho-D-glycerate: step 2/3. Its pathway is cofactor biosynthesis; pyridoxine 5'-phosphate biosynthesis; pyridoxine 5'-phosphate from D-erythrose 4-phosphate: step 3/5. Its function is as follows. Catalyzes the reversible conversion of 3-phosphohydroxypyruvate to phosphoserine and of 3-hydroxy-2-oxo-4-phosphonooxybutanoate to phosphohydroxythreonine. The sequence is that of Phosphoserine aminotransferase from Burkholderia orbicola (strain MC0-3).